A 295-amino-acid polypeptide reads, in one-letter code: GTP cyclohydrolase FolE2 (295 aa).

Belongs to the GTP cyclohydrolase IV family.

The catalysed reaction is GTP + H2O = 7,8-dihydroneopterin 3'-triphosphate + formate + H(+). It participates in cofactor biosynthesis; 7,8-dihydroneopterin triphosphate biosynthesis; 7,8-dihydroneopterin triphosphate from GTP: step 1/1. In terms of biological role, converts GTP to 7,8-dihydroneopterin triphosphate. In Pseudomonas putida (strain W619), this protein is GTP cyclohydrolase FolE2.